Reading from the N-terminus, the 453-residue chain is tRNA modification GTPase MnmE (453 aa).

(6S)-5-formyl-5,6,7,8-tetrahydrofolate is bound by residues R22, E79, and K119. Residues 215–376 (GMKVVIAGRP…LREHLKACMG (162 aa)) enclose the TrmE-type G domain. N225 serves as a coordination point for K(+). Residues 225 to 230 (NAGKSS), 244 to 250 (TEIAGTT), 269 to 272 (DTAG), and 334 to 337 (NKAD) each bind GTP. Residue S229 coordinates Mg(2+). K(+)-binding residues include T244, I246, and T249. A Mg(2+)-binding site is contributed by T250. (6S)-5-formyl-5,6,7,8-tetrahydrofolate is bound at residue K453.

The protein belongs to the TRAFAC class TrmE-Era-EngA-EngB-Septin-like GTPase superfamily. TrmE GTPase family. As to quaternary structure, homodimer. Heterotetramer of two MnmE and two MnmG subunits. It depends on K(+) as a cofactor.

It is found in the cytoplasm. Functionally, exhibits a very high intrinsic GTPase hydrolysis rate. Involved in the addition of a carboxymethylaminomethyl (cmnm) group at the wobble position (U34) of certain tRNAs, forming tRNA-cmnm(5)s(2)U34. This Aeromonas salmonicida (strain A449) protein is tRNA modification GTPase MnmE.